A 248-amino-acid chain; its full sequence is Mannose-binding protein C (248 aa).

A signal peptide spans 1-20 (MSLFPSLTLLLLSVVATSYS). The region spanning 42-99 (GINGFPGKDGRDGTKGEKGEPGQGLRGLQGPPGKLGPPGNPGSSGSPGPKGQKGDPGE) is the Collagen-like domain. The interval 43-111 (INGFPGKDGR…DCESSLAASE (69 aa)) is disordered. 4-hydroxyproline is present on Pro-47. Residues 49–61 (KDGRDGTKGEKGE) show a composition bias toward basic and acidic residues. 4-hydroxyproline occurs at positions 73, 79, 82, and 88. Positions 82–91 (PGSSGSPGPK) are enriched in low complexity. A coiled-coil region spans residues 112–130 (RKALQTEMARIKKWLTFSL). A C-type lectin domain is found at 134 to 245 (VGNKFFLTNG…CSSSHLALCE (112 aa)). 2 cysteine pairs are disulfide-bonded: Cys-155–Cys-244 and Cys-222–Cys-236.

Oligomeric complex of 3 or more homotrimers. Interacts with MASP1 and MASP2. Interacts with MEP1A and MEP1B and may inhibit their catalytic activity. Hydroxylation on proline residues within the sequence motif, GXPG, is most likely to be 4-hydroxy as this fits the requirement for 4-hydroxylation in vertebrates.

The protein localises to the secreted. In terms of biological role, calcium-dependent lectin involved in innate immune defense. Binds mannose, fucose and N-acetylglucosamine on different microorganisms and activates the lectin complement pathway. Binds to late apoptotic cells, as well as to apoptotic blebs and to necrotic cells, but not to early apoptotic cells, facilitating their uptake by macrophages. This Macaca fascicularis (Crab-eating macaque) protein is Mannose-binding protein C (MBL2).